We begin with the raw amino-acid sequence, 116 residues long: Insulin (116 aa).

The signal sequence occupies residues 1-24 (MAALWLQSFSLLVLLVVSWPGSQA). 3 disulfide bridges follow: Cys32/Cys102, Cys44/Cys115, and Cys101/Cys106. Positions 56-93 (DVDQLLGFLPPKSGGAAAAGADNEVAEFAFKDQMEMMV) are cleaved as a propeptide — c peptide.

It belongs to the insulin family. As to quaternary structure, heterodimer of a B chain and an A chain linked by two disulfide bonds.

The protein localises to the secreted. In terms of biological role, insulin decreases blood glucose concentration. It increases cell permeability to monosaccharides, amino acids and fatty acids. It accelerates glycolysis, the pentose phosphate cycle, and glycogen synthesis in liver. In Lophius americanus (American angler), this protein is Insulin (ins).